The sequence spans 162 residues: Ciliary microtubule inner protein 5 (162 aa).

The interval 1–44 (MGSHPTPGLQRTTSAGYRLPPTRPPASVSPAARGGPMASRGLAG) is disordered.

The protein localises to the cell projection. The protein resides in the cilium. The chain is Ciliary microtubule inner protein 5 from Homo sapiens (Human).